Here is an 89-residue protein sequence, read N- to C-terminus: Antimicrobial peptide Ar-AMP (89 aa).

A signal peptide spans 1–25; the sequence is MVNMKSVALIVIVMMAFMMVDPSMG. Residues 26-68 enclose the Chitin-binding type-1 domain; that stretch reads AGECVQGRCPSGMCCSQFGYCGRGPKYCGRASTTVDHQADAAA. 3 cysteine pairs are disulfide-bonded: Cys29-Cys40, Cys34-Cys46, and Cys39-Cys53. A propeptide spans 56–89 (removed in mature form); the sequence is ASTTVDHQADAAAAAATKTANNPTDAKLAGAGSP.

In terms of biological role, chitin-binding protein that inhibits the growth of the fungal pathogens B.cinerea, F.culmorum, H.sativum and A.consortiale, but not that of R.solani. Induces morphological changes in the fungal pathogens F.culmorum, H.sativum and R.solani, but not in A.consortiale and B.cinerea. Has antibacterial activity against the Gram-positive bacterium B.subtilis, but lacks antibacterial activity against the Gram-negative bacterium E.coli. In Amaranthus retroflexus (Redroot amaranth), this protein is Antimicrobial peptide Ar-AMP.